A 450-amino-acid polypeptide reads, in one-letter code: Solute carrier family 52, riboflavin transporter, member 2 (450 aa).

5 consecutive transmembrane segments (helical) span residues 14–34, 47–67, 79–99, 114–136, and 147–167; these read LLVA…WVEL, LPSY…LVTL, IPIQ…APLW, FLTL…LPFL, and FFLG…AQGV. Asn178 carries an N-linked (GlcNAc...) asparagine glycan. Residues 201–221 traverse the membrane as a helical segment; sequence FFWVLTALLGTSAAAFQGLLL. Residues 230–268 are disordered; the sequence is ATMGTGLRVETPGTEEEEEEEEASPLQEPPGQVASIVSS. Acidic residues predominate over residues 242–252; that stretch reads GTEEEEEEEEA. Transmembrane regions (helical) follow at residues 282–302, 317–337, 344–364, 371–391, and 409–429; these read ACLL…LPAV, LAVV…MAVL, LYGL…LAVL, VGTS…AGVF, and ALLA…IAMF.

The protein belongs to the riboflavin transporter family. Highly expressed in the placenta and small intestine, moderately in the kidney, colon, lung, prostate, uterus, and thymus, and weakly in all other tissues.

The protein localises to the cell membrane. The enzyme catalyses riboflavin(in) = riboflavin(out). With respect to regulation, riboflavin transport is Na(+)-independent but moderately pH-sensitive. Activity is strongly inhibited by riboflavin analogs, such as lumiflavin. Weakly inhibited by flavin adenine dinucleotide (FAD) and flavin mononucleotide (FMN). Functionally, plasma membrane transporter mediating the uptake by cells of the water soluble vitamin B2/riboflavin that plays a key role in biochemical oxidation-reduction reactions of the carbohydrate, lipid, and amino acid metabolism. May also act as a receptor for 4-hydroxybutyrate. This chain is Solute carrier family 52, riboflavin transporter, member 2 (Slc52a2), found in Rattus norvegicus (Rat).